The chain runs to 426 residues: Serine--tRNA ligase (426 aa).

231–233 contributes to the L-serine binding site; that stretch reads TAE. ATP is bound at residue 262 to 264; sequence RSE. Residue E285 coordinates L-serine. Position 349-352 (349-352) interacts with ATP; the sequence is EISS. S385 contributes to the L-serine binding site.

This sequence belongs to the class-II aminoacyl-tRNA synthetase family. Type-1 seryl-tRNA synthetase subfamily. In terms of assembly, homodimer. The tRNA molecule binds across the dimer.

It localises to the cytoplasm. It catalyses the reaction tRNA(Ser) + L-serine + ATP = L-seryl-tRNA(Ser) + AMP + diphosphate + H(+). It carries out the reaction tRNA(Sec) + L-serine + ATP = L-seryl-tRNA(Sec) + AMP + diphosphate + H(+). Its pathway is aminoacyl-tRNA biosynthesis; selenocysteinyl-tRNA(Sec) biosynthesis; L-seryl-tRNA(Sec) from L-serine and tRNA(Sec): step 1/1. In terms of biological role, catalyzes the attachment of serine to tRNA(Ser). Is also able to aminoacylate tRNA(Sec) with serine, to form the misacylated tRNA L-seryl-tRNA(Sec), which will be further converted into selenocysteinyl-tRNA(Sec). This Brevibacillus brevis (strain 47 / JCM 6285 / NBRC 100599) protein is Serine--tRNA ligase.